The following is an 870-amino-acid chain: Protein csx2 (870 aa).

A disordered region spans residues 212 to 251 (TSPEISDAPPLSGNVDPLPINSPPLTNPVARDIDQTEPED). One can recognise a PH domain in the interval 510–614 (TSAKQGLLLA…WIEAIQYSIS (105 aa)). Phosphoserine is present on residues serine 625, serine 653, and serine 655. The tract at residues 647 to 672 (RVASVTSPSRHNSDSKEKKQTKSPSL) is disordered. Positions 657 to 666 (HNSDSKEKKQ) are enriched in basic and acidic residues. In terms of domain architecture, Arf-GAP spans 670–791 (PSLVKTLKEM…RFIKSSFSHD (122 aa)). The C4-type zinc-finger motif lies at 686–710 (CADCNTTARVEWCAINFPVVLCIDC).

The polypeptide is Protein csx2 (csx2) (Schizosaccharomyces pombe (strain 972 / ATCC 24843) (Fission yeast)).